Reading from the N-terminus, the 368-residue chain is 2-aminoethylphosphonate--pyruvate transaminase (368 aa).

Lys-192 bears the N6-(pyridoxal phosphate)lysine mark.

This sequence belongs to the class-V pyridoxal-phosphate-dependent aminotransferase family. PhnW subfamily. Homodimer. Requires pyridoxal 5'-phosphate as cofactor.

It carries out the reaction (2-aminoethyl)phosphonate + pyruvate = phosphonoacetaldehyde + L-alanine. Involved in phosphonate degradation. This Pseudomonas putida (strain ATCC 47054 / DSM 6125 / CFBP 8728 / NCIMB 11950 / KT2440) protein is 2-aminoethylphosphonate--pyruvate transaminase.